A 156-amino-acid polypeptide reads, in one-letter code: Aspartate carbamoyltransferase regulatory chain (156 aa).

4 residues coordinate Zn(2+): cysteine 109, cysteine 114, cysteine 140, and cysteine 143.

This sequence belongs to the PyrI family. As to quaternary structure, contains catalytic and regulatory chains. Requires Zn(2+) as cofactor.

Its function is as follows. Involved in allosteric regulation of aspartate carbamoyltransferase. The chain is Aspartate carbamoyltransferase regulatory chain from Methanosarcina acetivorans (strain ATCC 35395 / DSM 2834 / JCM 12185 / C2A).